The primary structure comprises 656 residues: PAN2-PAN3 deadenylation complex subunit pan3 (656 aa).

Disordered regions lie at residues 1–24 (MAATRYNSGDLRRQVGSPRAKNRD) and 75–117 (SFTP…QQAN). The C3H1-type zinc-finger motif lies at 24 to 53 (DTKETLCRNVVIYGHCRWEDSGCTFNHDQN). The PABPC-interacting motif-2 (PAM-2) motif lies at 63 to 83 (NSNRRVFNVESPSFTPANQQQ). 2 stretches are compositionally biased toward polar residues: residues 75–96 (SFTPANQQQSAGKKSTFSSQAA) and 107–117 (GTSTPTLQQAN). Residues 251–514 (QLLPNSGLPN…TVETLLGGIT (264 aa)) are pseudokinase domain. ATP is bound by residues 275 to 280 (TRNSTC), arginine 302, 352 to 359 (DFHPLSET), and 412 to 413 (SK). Positions 515 to 553 (THLANFANFVMQESDEKEFHLMRELENGRIARLMFKLSV) form a coiled coil. Positions 554-656 (VNERGDSCGV…SKPSATGATI (103 aa)) are knob domain.

It belongs to the protein kinase superfamily. PAN3 family. Homodimer. Forms a heterotrimer with a catalytic subunit par-1/pan2 to form the poly(A)-nuclease (PAN) deadenylation complex. Interacts (via PAM-2 motif) with poly(A)-binding protein pabp-1 (via PABC domain), conferring substrate specificity of the enzyme complex.

The protein resides in the cytoplasm. In terms of biological role, regulatory subunit of the poly(A)-nuclease (PAN) deadenylation complex, one of two cytoplasmic mRNA deadenylases involved in mRNA turnover. PAN specifically shortens poly(A) tails of RNA and the activity is stimulated by poly(A)-binding protein pabp-1. PAN deadenylation is followed by rapid degradation of the shortened mRNA tails by the CCR4-NOT complex. Deadenylated mRNAs are then degraded by two alternative mechanisms, namely exosome-mediated 3'-5' exonucleolytic degradation, or deadenylation-dependent mRNA decaping and subsequent 5'-3' exonucleolytic degradation by rgb-30/xrn1. May also be involved in post-transcriptional maturation of mRNA poly(A) tails. par-2/pan3 acts as a positive regulator for PAN activity, recruiting the catalytic subunit par-1/pan2 to mRNA via its interaction with RNA and with pabp-1. The chain is PAN2-PAN3 deadenylation complex subunit pan3 (par-2) from Neurospora crassa (strain ATCC 24698 / 74-OR23-1A / CBS 708.71 / DSM 1257 / FGSC 987).